A 325-amino-acid chain; its full sequence is GTP 3',8-cyclase (325 aa).

The Radical SAM core domain maps to 1–226 (MNTVNYLRIS…EGACYGNGPA (226 aa)). Arginine 8 is a GTP binding site. Residues cysteine 15 and cysteine 19 each coordinate [4Fe-4S] cluster. Tyrosine 21 lines the S-adenosyl-L-methionine pocket. Cysteine 22 lines the [4Fe-4S] cluster pocket. Arginine 60 contacts GTP. Glycine 64 is a binding site for S-adenosyl-L-methionine. Serine 91 contributes to the GTP binding site. Serine 115 contributes to the S-adenosyl-L-methionine binding site. Lysine 152 lines the GTP pocket. Methionine 186 is a binding site for S-adenosyl-L-methionine. The [4Fe-4S] cluster site is built by cysteine 249 and cysteine 252. 254–256 (RVR) contributes to the GTP binding site. Cysteine 266 is a [4Fe-4S] cluster binding site.

Belongs to the radical SAM superfamily. MoaA family. As to quaternary structure, monomer and homodimer. Requires [4Fe-4S] cluster as cofactor.

It catalyses the reaction GTP + AH2 + S-adenosyl-L-methionine = (8S)-3',8-cyclo-7,8-dihydroguanosine 5'-triphosphate + 5'-deoxyadenosine + L-methionine + A + H(+). Its pathway is cofactor biosynthesis; molybdopterin biosynthesis. Functionally, catalyzes the cyclization of GTP to (8S)-3',8-cyclo-7,8-dihydroguanosine 5'-triphosphate. The sequence is that of GTP 3',8-cyclase from Gloeobacter violaceus (strain ATCC 29082 / PCC 7421).